A 98-amino-acid polypeptide reads, in one-letter code: NADH-ubiquinone oxidoreductase chain 4L (98 aa).

3 consecutive transmembrane segments (helical) span residues 1-21 (MSMVYANIFLAFIMSLMGLLM), 29-49 (SLLCLEGMMLSLFVMMTVTIL), and 61-81 (IILLVFAACEAALGLSLLVMV).

This sequence belongs to the complex I subunit 4L family. Core subunit of respiratory chain NADH dehydrogenase (Complex I) which is composed of 45 different subunits.

Its subcellular location is the mitochondrion inner membrane. The catalysed reaction is a ubiquinone + NADH + 5 H(+)(in) = a ubiquinol + NAD(+) + 4 H(+)(out). Functionally, core subunit of the mitochondrial membrane respiratory chain NADH dehydrogenase (Complex I) which catalyzes electron transfer from NADH through the respiratory chain, using ubiquinone as an electron acceptor. Part of the enzyme membrane arm which is embedded in the lipid bilayer and involved in proton translocation. The protein is NADH-ubiquinone oxidoreductase chain 4L (MT-ND4L) of Phoca fasciata (Ribbon seal).